Reading from the N-terminus, the 367-residue chain is MNLHPRDIDETPDRDAAAAALAVLRRWASGATSTEISELDPSVARLLPDAALSNYPDLSRQYPEDFTVDATYRAGLPDLQNGPSSLIRGAKQQIQHVGISNFRLPIRFHRKEGDDLTLETSVTGTVSLEAGKKGINMSRIMRSFYKHAERTFSFEVIEAALDDYMTDLDSFDARIQMRFSYPERIESLRSGLSGYQYYDIALELVEQGGERLKIMHLDYVYSSTCPCSLELSEHARSSRGQLATPHSQRSVARLSVVVDGDASCLWFEDLIALCRRAVPTETQVMVKREDEQAFAELNAANPIFVEDAARLFCAELLADHRIGDFRVVASHQESLHSHDAVSVLTEGATFATASLDPRLFATLFHVG.

Belongs to the GTP cyclohydrolase IV family.

The enzyme catalyses GTP + H2O = 7,8-dihydroneopterin 3'-triphosphate + formate + H(+). It functions in the pathway cofactor biosynthesis; 7,8-dihydroneopterin triphosphate biosynthesis; 7,8-dihydroneopterin triphosphate from GTP: step 1/1. Functionally, converts GTP to 7,8-dihydroneopterin triphosphate. The protein is GTP cyclohydrolase FolE2 of Ruegeria pomeroyi (strain ATCC 700808 / DSM 15171 / DSS-3) (Silicibacter pomeroyi).